The chain runs to 3326 residues: Deoxyribonuclease CdiA (3326 aa).

Positions 36–342 (TADGVLTSGG…ARGALTLTGS (307 aa)) are two-partner system transport domain (TPS). Residues 343 to 1396 (YAGAGSLYSD…ITVRTGTLTN (1054 aa)) form an FHA-1 region. The segment at 1397–1765 (QREGLVVTES…QQLGSPSLTD (369 aa)) is receptor binding domain (RBD). Positions 1766 to 1951 (YPLPTSQSGL…LAQADKTNLQ (186 aa)) are YP domain. Residues 1959-2097 (SVSLSAGGDI…AGGPLQLAAG (139 aa)) form a periplasmic FHA-1 repeat (pFR) region. The FHA-2 stretch occupies residues 2125 to 2660 (QGLVQSTVAS…SNRYDSKQTS (536 aa)). The short motif at 3060 to 3063 (VENN) is the VENN CT cleavage motif element. The segment at 3060 to 3326 (VENNSLGDIA…DRNRQIGVIK (267 aa)) is CT domain.

This sequence in the N-terminal section; belongs to the CdiA toxin family. As to quaternary structure, the C-terminal (CT) domain interacts with cognate CdiI but not non-cognate CdiI from E.coli strain 536 / UPEC.

Its subcellular location is the target cell. It is found in the target cell cytoplasm. In terms of biological role, toxic component of a toxin-immunity protein module, which functions as a cellular contact-dependent growth inhibition (CDI) system. CDI modules allow bacteria to communicate with and inhibit the growth of closely related neighboring bacteria in a contact-dependent fashion. CDI is neutralized by its cognate immunity protein CdiI, but not by non-cognate CdiI from other bacteria. The C-terminal domain (CT) has strong DNase activity; this activity is inhibited by cognate CdiI. The CdiA protein is thought to be exported from the cell through the central lumen of CdiB, the other half of its two-partner system (TPS). The TPS domain probably remains associated with CdiB while the FHA-1 domain forms an extended filament with the receptor-binding domain (RBD) at its extremity; in the secretion arrested state the C-terminus of the RBD and YP domains form a hairpin-like structure as the FHA-2, PT and CT domains are periplasmic. The YP domain is probably responsible for this arrest at the point where it re-enters the host cell periplasm. Upon binding to a target cell outer membrane receptor a signal is transmitted to activate secretion. The filament elongates slightly, the rest of CdiA is secreted and the FHA-2 domain becomes stably associated with the target cell's outer membrane where it facilitates entry of the toxic CT domain into the target cell periplasm. From there the toxic CT domain is cleaved and gains access to the target cell cytoplasm via an inner membrane protein. This chain is Deoxyribonuclease CdiA, found in Dickeya dadantii (strain 3937) (Erwinia chrysanthemi (strain 3937)).